The following is a 122-amino-acid chain: Large ribosomal subunit protein uL14 (122 aa).

Belongs to the universal ribosomal protein uL14 family. Part of the 50S ribosomal subunit. Forms a cluster with proteins L3 and L19. In the 70S ribosome, L14 and L19 interact and together make contacts with the 16S rRNA in bridges B5 and B8.

Its function is as follows. Binds to 23S rRNA. Forms part of two intersubunit bridges in the 70S ribosome. This is Large ribosomal subunit protein uL14 from Lactobacillus acidophilus (strain ATCC 700396 / NCK56 / N2 / NCFM).